The sequence spans 929 residues: Transcription initiation factor TFIID subunit 3 (929 aa).

2 disordered regions span residues 131–152 and 176–197; these read IVSS…TSAE and LGKR…RPRL. 4 positions are modified to phosphoserine: Ser183, Ser199, Ser229, and Ser243. Disordered regions lie at residues 221-358 and 405-578; these read TQKI…ETIQ and DPFE…PWKE. Over residues 265-288 the composition is skewed to low complexity; the sequence is TKSFTPKTKTKTSSPGQKTKSPKT. Lys266 is modified (N6-acetyllysine). 3 positions are modified to phosphoserine: Ser291, Ser297, and Ser301. Polar residues-rich tracts occupy residues 340–358 and 434–466; these read PNRT…ETIQ and PKAS…SWTM. The residue at position 501 (Thr501) is a Phosphothreonine. Residues 504–514 are compositionally biased toward basic and acidic residues; the sequence is PLHKVYEEKTK. Over residues 523–537 the composition is skewed to basic residues; sequence KKLKKELKTKMKKKE. Over residues 538–578 the composition is skewed to basic and acidic residues; sequence KQRDREREKDKNKDKSKEKDKVKEKEKDKETGRETKYPWKE. Residue Lys581 forms a Glycyl lysine isopeptide (Lys-Gly) (interchain with G-Cter in SUMO2) linkage. 2 stretches are compositionally biased toward basic and acidic residues: residues 603–612 and 621–648; these read KLKDGLVRKE and KDRE…DKMK. The segment at 603–658 is disordered; that stretch reads KLKDGLVRKEKEKHKDKKKDREKGKKDKDKREKEKVKDKGREDKMKAPAPPLVLPP. Ser667 carries the post-translational modification Phosphoserine. Basic and acidic residues predominate over residues 692-701; that stretch reads EKEKVKEKEK. Residues 692-748 form a disordered region; it reads EKEKVKEKEKKKDKKEKKKKKEKEKEKKEKEREKEKREREKREKEKEKHKHEKIKVE. The span at 702-713 shows a compositional bias: basic residues; sequence KKDKKEKKKKKE. Basic and acidic residues predominate over residues 714–737; the sequence is KEKEKKEKEREKEKREREKREKEK. Lys746 is covalently cross-linked (Glycyl lysine isopeptide (Lys-Gly) (interchain with G-Cter in SUMO2)). Ser755 is subject to Phosphoserine. Lys776 carries the post-translational modification N6-acetyllysine. Residues 778-787 show a composition bias toward low complexity; sequence VPAPEAKPAP. The segment at 778–807 is disordered; that stretch reads VPAPEAKPAPSQNRPKTPPPAPAPAPGPML. Residues 793–804 are compositionally biased toward pro residues; it reads KTPPPAPAPAPG. Residues 865–915 form a PHD-type zinc finger; it reads IWICPGCNKPDDGSPMIGCDDCDDWYHWPCVGIMTAPPEEMQWFCPKCANK. The Zn(2+) site is built by Cys868, Cys871, Cys883, Cys886, His891, Cys894, Cys909, and Cys912.

The protein belongs to the TAF3 family. As to quaternary structure, component of the TFIID basal transcription factor complex, composed of TATA-box-binding protein TBP, and a number of TBP-associated factors (TAFs), including TAF1, TAF2, TAF3, TAF4, TAF5, TAF6, TAF7, TAF8, TAF9, TAF10, TAF11, TAF12 and TAF13. Interacts with TAF10 via the histone fold. Interacts with TAF13, TBP, SAP130 and GCN5L2. Interacts with TBPL2.

The protein resides in the nucleus. In terms of biological role, the TFIID basal transcription factor complex plays a major role in the initiation of RNA polymerase II (Pol II)-dependent transcription. TFIID recognizes and binds promoters with or without a TATA box via its subunit TBP, a TATA-box-binding protein, and promotes assembly of the pre-initiation complex (PIC). The TFIID complex consists of TBP and TBP-associated factors (TAFs), including TAF1, TAF2, TAF3, TAF4, TAF5, TAF6, TAF7, TAF8, TAF9, TAF10, TAF11, TAF12 and TAF13. The TFIID complex structure can be divided into 3 modules TFIID-A, TFIID-B, and TFIID-C. TAF3 forms the TFIID-A module together with TAF5 and TBP. Required in complex with TBPL2 for the differentiation of myoblasts into myocytes. The TAF3-TBPL2 complex replaces TFIID at specific promoters at an early stage in the differentiation process. The chain is Transcription initiation factor TFIID subunit 3 (TAF3) from Homo sapiens (Human).